Consider the following 350-residue polypeptide: UDP-glucose 4-epimerase GEPI48 (350 aa).

Residue 5–36 coordinates NAD(+); that stretch reads TVLVTGGAGYIGSHTVLQLLLGGFKAVVVDNL. A substrate-binding site is contributed by S130. Y154 (proton acceptor) is an active-site residue.

The protein belongs to the NAD(P)-dependent epimerase/dehydratase family. It depends on NAD(+) as a cofactor.

It carries out the reaction UDP-alpha-D-glucose = UDP-alpha-D-galactose. Its pathway is carbohydrate metabolism; galactose metabolism. This is UDP-glucose 4-epimerase GEPI48 from Cyamopsis tetragonoloba (Guar).